The primary structure comprises 488 residues: Aerolysin (488 aa).

An N-terminal signal peptide occupies residues 1–24; it reads MMNRIITANLAFLASSLMLAQVQA. 2 disulfide bridges follow: C43/C99 and C183/C188. The tract at residues 69–85 is interaction with host N-linked glycan; it reads WQITGLADRWVIMGPGY. The part of the transmembrane beta-barrel after proteolytic activation of the toxin and insertion into the host membrane stretch occupies residues 256 to 288; it reads YSLSEKVTTKNKFQWPLVGETELAIEIAASQSW. An interaction with glycans from host GPI-anchor region spans residues 346–355; sequence RWGGNAWYTH. The propeptide occupies 444–488; that stretch reads TRSAKAAQLRSASAEEVALTSVDLDSEALANEGFGNVSLTIVPVQ.

It belongs to the aerolysin family. Homodimer in solution; homoheptamer in the host membrane. After binding to GPI-anchored proteins in target membranes and proteolytic removal of the C-terminal propeptide, the protein assembles into a heptameric pre-pore complex. A further conformation change leads to insertion into the host membrane. In terms of processing, proteolytic cleavage and subsequent release of the propeptide trigger a major conformation change, leading to the formation of a heptameric pre-pore that then inserts into the host membrane.

The protein localises to the secreted. It localises to the host cell membrane. Its function is as follows. Secreted, cytolytic toxin that forms pores in host membranes after proteolytic removal of a C-terminal propeptide, leading to destruction of the membrane permeability barrier and cell death. The pores are formed by transmembrane beta-strands and are approximately 3 nm in diameter. This Aeromonas sobria protein is Aerolysin (asa1).